The chain runs to 328 residues: tRNA dimethylallyltransferase (328 aa).

ATP is bound at residue 25–32 (GNTGSGKS). 27–32 (TGSGKS) lines the substrate pocket. Positions 50 to 53 (DSRQ) are interaction with substrate tRNA.

Belongs to the IPP transferase family. In terms of assembly, monomer. The cofactor is Mg(2+).

The catalysed reaction is adenosine(37) in tRNA + dimethylallyl diphosphate = N(6)-dimethylallyladenosine(37) in tRNA + diphosphate. Its function is as follows. Catalyzes the transfer of a dimethylallyl group onto the adenine at position 37 in tRNAs that read codons beginning with uridine, leading to the formation of N6-(dimethylallyl)adenosine (i(6)A). In Dehalococcoides mccartyi (strain ATCC BAA-2100 / JCM 16839 / KCTC 5957 / BAV1), this protein is tRNA dimethylallyltransferase.